Here is a 546-residue protein sequence, read N- to C-terminus: MGAYLSQPNTVKCSGDGVGAPRLPLPYGFSAMQGWRVSMEDAHNCIPELDSETAMFSVYDGHGGEEVALYCAKYLPDIIKDQKAYKEGKLQKALEDAFLAIDAKLTTEEVIKELAQIAGRPTEDEDEKEKVADEDDVDNEEAALLHEEATMTIEELLTRYGQNCHKGPPHSKSGGGTGEEPGSQGLNGEAGPEDSTRETPSQENGPTAKAYTGFSSNSERGTEAGQVGEPGIPTGEAGPSCSSASDKLPRVAKSKFFEDSEDESDEAEEEEEDSEECSEEEDGYSSEEAENEEDEDDTEEAEEDDEEEEEEMMVPGMEGKEEPGSDSGTTAVVALIRGKQLIVANAGDSRCVVSEAGKALDMSYDHKPEDEVELARIKNAGGKVTMDGRVNGGLNLSRAIGDHFYKRNKNLPPEEQMISALPDIKVLTLTDDHEFMVIACDGIWNVMSSQEVVDFIQSKISQRDENGELRLLSSIVEELLDQCLAPDTSGDGTGCDNMTCIIICFKPRNTAELQPESGKRKLEEVLSTEGAEENGNSDKKKKAKRD.

The N-myristoyl glycine moiety is linked to residue G2. R22 is subject to Omega-N-methylarginine. In terms of domain architecture, PPM-type phosphatase spans P26–F505. Mn(2+)-binding residues include D60 and G61. 2 disordered regions span residues Q116–N139 and G161–G328. T122 is modified (phosphothreonine). Over residues E123–N139 the composition is skewed to acidic residues. Residue S183 is modified to Phosphoserine. Over residues D259 to M312 the composition is skewed to acidic residues. An N6-acetyllysine modification is found at K383. The Mn(2+) site is built by D441 and D496. The tract at residues E512–D546 is disordered. The residue at position 527 (S527) is a Phosphoserine.

Belongs to the PP2C family. As to quaternary structure, interacts with NOL3; may dephosphorylate NOL3. Mg(2+) serves as cofactor. It depends on Mn(2+) as a cofactor. As to expression, widely expressed. Most abundant in testis, skeletal muscle, and heart.

It is found in the cytoplasm. Its subcellular location is the membrane. It catalyses the reaction O-phospho-L-seryl-[protein] + H2O = L-seryl-[protein] + phosphate. It carries out the reaction O-phospho-L-threonyl-[protein] + H2O = L-threonyl-[protein] + phosphate. In Homo sapiens (Human), this protein is Protein phosphatase 1G (PPM1G).